The sequence spans 124 residues: Heat-labile enterotoxin B chain (124 aa).

A signal peptide spans 1-21 (MNKVKCYVLFTALLSSLCAYG). Cysteine 30 and cysteine 107 form a disulfide bridge.

Heterohexamer of one A chain and of five B chains.

Functionally, the biological activity of the toxin is produced by the A chain, which activates intracellular adenyl cyclase. This Escherichia coli O78:H11 (strain H10407 / ETEC) protein is Heat-labile enterotoxin B chain (eltB).